Consider the following 197-residue polypeptide: Lipoprotein LprI (197 aa).

An N-terminal signal peptide occupies residues 1-15 (MRWIGVLVTALVLSA). A lipid anchor (N-palmitoyl cysteine) is attached at C16. The S-diacylglycerol cysteine moiety is linked to residue C16.

The protein in the C-terminal section; belongs to the MliC family. As to quaternary structure, probably a homodimer. Post-translationally, glycosylated.

The protein localises to the cell membrane. It localises to the secreted. Its subcellular location is the cell wall. The protein resides in the cell surface. In terms of biological role, strongly binds and inhibits lysozyme, may help bacteria survive in lysozyme-producing host cells such as monocyte-derived macrophages. The polypeptide is Lipoprotein LprI (lprI) (Mycobacterium bovis (strain ATCC BAA-935 / AF2122/97)).